Reading from the N-terminus, the 214-residue chain is uncharacterized protein (214 aa).

Positions 131 to 214 (TEDILSPPSP…SSSSDSLDAY (84 aa)) are disordered. A compositionally biased stretch (basic residues) spans 174-189 (HRRRRTRRQLRYRQRV). Residues 197–214 (DLGEPLESSSSSDSLDAY) show a composition bias toward low complexity.

This is an uncharacterized protein from Tupaia.